Consider the following 156-residue polypeptide: uncharacterized protein (156 aa).

2 disordered regions span residues 22–64 (KERV…VLKK) and 81–156 (AARA…DENE). The segment covering 43–56 (PEEDGDHSDKEDEQ) has biased composition (acidic residues). S50 carries the phosphoserine modification. Residue K108 is modified to N6-acetyllysine. Residues 121–134 (TKEEDEINKQDSVK) are compositionally biased toward basic and acidic residues. Position 148 is a phosphoserine (S148).

This is an uncharacterized protein from Bos taurus (Bovine).